Consider the following 219-residue polypeptide: Small ribosomal subunit protein uS3c (219 aa).

The region spanning 47–118 (IRNHVRNSSN…KLRMTLVEVL (72 aa)) is the KH type-2 domain.

Belongs to the universal ribosomal protein uS3 family. As to quaternary structure, part of the 30S ribosomal subunit.

Its subcellular location is the plastid. It localises to the chloroplast. The protein is Small ribosomal subunit protein uS3c (rps3) of Chara vulgaris (Common stonewort).